Consider the following 252-residue polypeptide: Protein BTG3 (252 aa).

The interval 138-163 (VTSDYHSGSSSSDEDTSKEVDVKPSS) is disordered.

Belongs to the BTG family. In terms of tissue distribution, ubiquitous.

Overexpression impairs serum-induced cell cycle progression from the G0/G1 to S phase. The sequence is that of Protein BTG3 (Btg3) from Mus musculus (Mouse).